Here is a 213-residue protein sequence, read N- to C-terminus: NADH-quinone oxidoreductase subunit I (213 aa).

4Fe-4S ferredoxin-type domains are found at residues 74–103 and 113–142; these read RFIE…METS and ENYS…HGTE. The [4Fe-4S] cluster site is built by Cys83, Cys86, Cys89, Cys93, Cys122, Cys125, Cys128, and Cys132.

The protein belongs to the complex I 23 kDa subunit family. NDH-1 is composed of 14 different subunits. Subunits NuoA, H, J, K, L, M, N constitute the membrane sector of the complex. [4Fe-4S] cluster is required as a cofactor.

The protein localises to the cell inner membrane. It catalyses the reaction a quinone + NADH + 5 H(+)(in) = a quinol + NAD(+) + 4 H(+)(out). Functionally, NDH-1 shuttles electrons from NADH, via FMN and iron-sulfur (Fe-S) centers, to quinones in the respiratory chain. The immediate electron acceptor for the enzyme in this species is believed to be ubiquinone. Couples the redox reaction to proton translocation (for every two electrons transferred, four hydrogen ions are translocated across the cytoplasmic membrane), and thus conserves the redox energy in a proton gradient. The chain is NADH-quinone oxidoreductase subunit I from Campylobacter jejuni subsp. jejuni serotype O:23/36 (strain 81-176).